The following is a 621-amino-acid chain: Chaperone protein HtpG (621 aa).

The a; substrate-binding stretch occupies residues 1–328; it reads MIQEKKKFDA…SEDLPLNISR (328 aa). The interval 329 to 544 is b; the sequence is ESLQHNSVLE…DAAMDIRMER (216 aa). Positions 475-494 are disordered; sequence SDIDVEQTTSQSEAKNTDSK. Positions 545–621 are c; sequence FLIEQKQIAN…LNDIVQKAIL (77 aa).

This sequence belongs to the heat shock protein 90 family. In terms of assembly, homodimer.

The protein resides in the cytoplasm. Its function is as follows. Molecular chaperone. Has ATPase activity. This Rickettsia rickettsii (strain Iowa) protein is Chaperone protein HtpG.